Here is a 468-residue protein sequence, read N- to C-terminus: Neuronal acetylcholine receptor subunit alpha-5 (468 aa).

Positions 1–22 are cleaved as a signal peptide; that stretch reads MATRGSGPRAPRLLLLVQLVAG. The Extracellular segment spans residues 23 to 254; that stretch reads RCGLAGAAGG…VIKRLPLFYT (232 aa). N-linked (GlcNAc...) asparagine glycosylation is found at N155, N183, and N229. A disulfide bond links C170 and C184. The cysteines at positions 234 and 235 are disulfide-linked. 3 consecutive transmembrane segments (helical) span residues 255–275, 282–302, and 317–337; these read LFLI…FYLP, ICLC…IEEI, and LVFT…AINI. Topologically, residues 338 to 429 are cytoplasmic; it reads HHRSSSTHNA…WKFIAQVLDR (92 aa). A helical transmembrane segment spans residues 430–451; the sequence is MFLWTFLFVSIVGSLGLFVPVI. The Extracellular portion of the chain corresponds to 452 to 468; it reads YKWANILIPVHIGNANK.

This sequence belongs to the ligand-gated ion channel (TC 1.A.9) family. Acetylcholine receptor (TC 1.A.9.1) subfamily. Alpha-5/CHRNA5 sub-subfamily. As to quaternary structure, neuronal AChR that forms heteropentamers composed of two different type of subunits: alpha and non-alpha (beta). CHRNA5/alpha-5 subunit is only able to form functional nAChRs when co-assembled with another alpha subunit, can be combined to CHRNA4/alpha-4 or CHRNA3/alpha-3 and CHRNB4/beta-4 or CHRNB2/beta-2 to give rise to functional receptors. Interacts with LYPD6.

It is found in the synaptic cell membrane. Its subcellular location is the cell membrane. It carries out the reaction Ca(2+)(in) = Ca(2+)(out). The enzyme catalyses K(+)(in) = K(+)(out). The catalysed reaction is Na(+)(in) = Na(+)(out). With respect to regulation, activated by a myriad of ligands such as acetylcholine, cytisine, nicotine, choline and epibatidine. In terms of biological role, component of neuronal acetylcholine receptors (nAChRs) that function as pentameric, ligand-gated cation channels with high calcium permeability among other activities. nAChRs are excitatory neurotrasnmitter receptors formed by a collection of nAChR subunits known to mediate synaptic transmission in the nervous system and the neuromuscular junction. Each nAchR subunit confers differential attributes to channel properties, including activation, deactivation and desensitization kinetics, pH sensitivity, cation permeability, and binding to allosteric modulators. Has an accessory rather than functional role and is only able to form functional nAChRs when co-assembled with another beta subunit. Participates in pentameric assemblies along with CHRNA3, CHRNA4, CHRNB2 and CHRNB4. Increases receptor sensitivity to acetylcholine and nicotine when associated with CHRNA4 and CHRNB2. Plays a role in nicotine addiction. The chain is Neuronal acetylcholine receptor subunit alpha-5 (CHRNA5) from Pan troglodytes (Chimpanzee).